Consider the following 315-residue polypeptide: 2-oxoglutarate and iron-dependent oxygenase domain-containing protein 3 (315 aa).

A disordered region spans residues 1 to 31 (MAPQRRGPPRIPEGSSAAERRRATSTKKDRL). At 1–41 (MAPQRRGPPRIPEGSSAAERRRATSTKKDRLPREAQRTWLR) the chain is on the cytoplasmic side. Positions 18-31 (AERRRATSTKKDRL) are enriched in basic and acidic residues. Residues 42–62 (IVAFGVGLALVTCLLWSSVGI) form a helical; Signal-anchor for type II membrane protein membrane-spanning segment. Residues 63-315 (DDDVAEVVAR…DHGIEDPVLT (253 aa)) lie on the Lumenal side of the membrane. The Fe2OG dioxygenase domain occupies 203–305 (KPTFFSRINS…AITIAFTCNP (103 aa)). N211 carries N-linked (GlcNAc...) asparagine glycosylation. Fe cation contacts are provided by H226 and D228. An N-linked (GlcNAc...) asparagine glycan is attached at N263. H284 contributes to the Fe cation binding site. R294 is a catalytic residue. R294 is a binding site for 2-oxoglutarate.

The protein belongs to the OGFOD3 family. The cofactor is Fe(2+). L-ascorbate serves as cofactor.

It localises to the membrane. The sequence is that of 2-oxoglutarate and iron-dependent oxygenase domain-containing protein 3 (Ogfod3) from Mus musculus (Mouse).